Here is a 423-residue protein sequence, read N- to C-terminus: Phosphoribosylamine--glycine ligase (423 aa).

Positions 107 to 312 constitute an ATP-grasp domain; the sequence is KAFADRYGLP…LVPYLVACAN (206 aa). Residue 133 to 193 coordinates ATP; that stretch reads LELFEPPYVI…EEFLEGEIGS (61 aa). 3 residues coordinate Mg(2+): glutamate 270, glutamate 282, and asparagine 284. The Mn(2+) site is built by glutamate 270, glutamate 282, and asparagine 284.

Belongs to the GARS family. The cofactor is Mg(2+). Mn(2+) is required as a cofactor.

It carries out the reaction 5-phospho-beta-D-ribosylamine + glycine + ATP = N(1)-(5-phospho-beta-D-ribosyl)glycinamide + ADP + phosphate + H(+). It functions in the pathway purine metabolism; IMP biosynthesis via de novo pathway; N(1)-(5-phospho-D-ribosyl)glycinamide from 5-phospho-alpha-D-ribose 1-diphosphate: step 2/2. The polypeptide is Phosphoribosylamine--glycine ligase (Phenylobacterium zucineum (strain HLK1)).